The sequence spans 1279 residues: ATP-dependent helicase/nuclease subunit A (1279 aa).

Residues Thr-4–Arg-499 form the UvrD-like helicase ATP-binding domain. Ala-25–Thr-32 is a binding site for ATP. Positions Glu-526–Gly-853 constitute a UvrD-like helicase C-terminal domain.

It belongs to the helicase family. AddA subfamily. Heterodimer of AddA and AddB/RexB. Mg(2+) is required as a cofactor.

It catalyses the reaction Couples ATP hydrolysis with the unwinding of duplex DNA by translocating in the 3'-5' direction.. The catalysed reaction is ATP + H2O = ADP + phosphate + H(+). Functionally, the heterodimer acts as both an ATP-dependent DNA helicase and an ATP-dependent, dual-direction single-stranded exonuclease. Recognizes the chi site generating a DNA molecule suitable for the initiation of homologous recombination. The AddA nuclease domain is required for chi fragment generation; this subunit has the helicase and 3' -&gt; 5' nuclease activities. This Clostridium botulinum (strain Okra / Type B1) protein is ATP-dependent helicase/nuclease subunit A.